A 650-amino-acid chain; its full sequence is Putative pumilio homolog 7, chloroplastic (650 aa).

2 disordered regions span residues 1–22 and 200–235; these read MDEF…RTPL and NDDK…GQEI. The N-terminal 77 residues, 1–77, are a transit peptide targeting the chloroplast; the sequence is MDEFREASSV…SPPFNGIIPK (77 aa). Composition is skewed to low complexity over residues 8–22 and 217–232; these read SSVS…RTPL and PSYS…YNNG. Positions 308-650 constitute a PUM-HD domain; that stretch reads SNTRALMSNN…RIFSRNLLKK (343 aa). 8 Pumilio repeats span residues 333–368, 369–404, 408–443, 445–480, 481–516, 517–552, 553–591, and 594–625; these read DIQG…IIFN, EVIA…QIVL, EEPG…SLVK, ALRP…FIFD, AATK…KLIA, EISR…MMLA, QLKG…ELVS, and HFDQ…SLVE.

Its subcellular location is the plastid. The protein localises to the chloroplast. It is found in the cytoplasm. Functionally, sequence-specific RNA-binding protein that regulates translation and mRNA stability by binding the 3'-UTR of target mRNAs. This is Putative pumilio homolog 7, chloroplastic (APUM7) from Arabidopsis thaliana (Mouse-ear cress).